Consider the following 270-residue polypeptide: Regulatory protein RecX (270 aa).

The protein belongs to the RecX family.

It localises to the cytoplasm. In terms of biological role, modulates RecA activity. The protein is Regulatory protein RecX of Bacillus cereus (strain 03BB102).